The chain runs to 168 residues: Cell division inhibitor SulA (168 aa).

Residues 105–111 (ALLTGNY) are ftsZ binding. Residues 161-168 (KIHSTLYH) form a lon protease binding region.

It belongs to the SulA family. In terms of assembly, interacts with FtsZ. Post-translationally, is rapidly cleaved and degraded by the Lon protease once DNA damage is repaired.

Functionally, component of the SOS system and an inhibitor of cell division. Accumulation of SulA causes rapid cessation of cell division and the appearance of long, non-septate filaments. In the presence of GTP, binds a polymerization-competent form of FtsZ in a 1:1 ratio, thus inhibiting FtsZ polymerization and therefore preventing it from participating in the assembly of the Z ring. This mechanism prevents the premature segregation of damaged DNA to daughter cells during cell division. This Pectobacterium carotovorum subsp. carotovorum (strain PC1) protein is Cell division inhibitor SulA.